The chain runs to 950 residues: A disintegrin and metalloproteinase with thrombospondin motifs 15 (950 aa).

Residues 1–18 (MLLLGISILALAWRPAGS) form the signal peptide. A propeptide spanning residues 19–212 (SEPEWEVVVP…NRRRSGRAKR (194 aa)) is cleaved from the precursor. N-linked (GlcNAc...) asparagine glycosylation occurs at Asn-141. The disordered stretch occupies residues 144 to 172 (APEAQRHSQGAHLLQRRGAPVGPSGDPTS). A Cysteine switch motif is present at residues 172–179 (SRCGVASG). Cys-174 serves as a coordination point for Zn(2+). A Peptidase M12B domain is found at 218-427 (RYVETLVVAD…GHGDCLLDQP (210 aa)). Intrachain disulfides connect Cys-293/Cys-345, Cys-322/Cys-327, Cys-339/Cys-422, Cys-377/Cys-406, Cys-448/Cys-470, Cys-459/Cys-480, Cys-465/Cys-499, Cys-493/Cys-504, Cys-528/Cys-565, Cys-532/Cys-570, and Cys-543/Cys-555. Residue His-361 coordinates Zn(2+). Glu-362 is an active-site residue. Zn(2+) is bound by residues His-365 and His-371. The Disintegrin domain occupies 428–515 (SKPITLPEDL…ERHNPNKYRV (88 aa)). One can recognise a TSP type-1 1 domain in the interval 516–571 (DGSWAKWEPYGSCSRTCGGGVQLARRQCSNPTPANGGKYCEGVRVKYRSCNLEPCP). 3 N-linked (GlcNAc...) asparagine glycosylation sites follow: Asn-591, Asn-623, and Asn-679. The segment at 701 to 838 (AIPAGASSID…SNQVEQPDNR (138 aa)) is spacer. The interval 798–822 (FYLPKEPREDKSTRPKDPRGSPVLR) is disordered. Over residues 802-816 (KEPREDKSTRPKDPR) the composition is skewed to basic and acidic residues. TSP type-1 domains are found at residues 839–895 (PPAR…EPCP) and 896–949 (TWEL…VLRP).

Zn(2+) is required as a cofactor. The precursor is cleaved by a furin endopeptidase. In terms of processing, glycosylated. Can be O-fucosylated by POFUT2 on a serine or a threonine residue found within the consensus sequence C1-X(2)-(S/T)-C2-G of the TSP type-1 repeat domains where C1 and C2 are the first and second cysteine residue of the repeat, respectively. Fucosylated repeats can then be further glycosylated by the addition of a beta-1,3-glucose residue by the glucosyltransferase, B3GALTL. Fucosylation mediates the efficient secretion of ADAMTS family members. Can be C-glycosylated with one or two mannose molecules on tryptophan residues within the consensus sequence W-X-X-W of the TPRs. Also N-glycosylated. These other glycosylations can also facilitate secretion. In the adult colon, highly expressed in the muscularis externa (inner circular smooth muscle and outer longitudinal smooth muscle), muscularis mucosa, submucosal glands, crypt, villi epithelial cells, goblet cells and lamina propria. Expressed at perimuscular and peritendious areas in the developing limbs.

The protein localises to the secreted. It localises to the extracellular space. It is found in the extracellular matrix. Its subcellular location is the cell surface. Functionally, metalloprotease which has proteolytic activity against the proteoglycan VCAN, cleaving it at the 'Glu-1401-|-1402-Ala' site. Cleaves VCAN in the pericellular matrix surrounding myoblasts, facilitating myoblast contact and fusion which is required for skeletal muscle development and regeneration. This Mus musculus (Mouse) protein is A disintegrin and metalloproteinase with thrombospondin motifs 15 (Adamts15).